Here is a 519-residue protein sequence, read N- to C-terminus: LysM domain-containing protein ARB_03442 (519 aa).

Positions Met-1–Ala-19 are cleaved as a signal peptide. Residue Asn-47 is glycosylated (N-linked (GlcNAc...) asparagine). In terms of domain architecture, LysM spans Lys-312 to Val-358. The lysM domain stretch occupies residues Tyr-314–Val-358. Residues Pro-407–Thr-416 are compositionally biased toward low complexity. Positions Pro-407–Pro-458 are disordered. Over residues Val-417–Lys-433 the composition is skewed to basic and acidic residues. Asn-460 carries an N-linked (GlcNAc...) asparagine glycan. The 44-residue stretch at Asp-467–Thr-510 folds into the Chitin-binding type-1 domain. Cystine bridges form between Cys-470–Cys-485, Cys-476–Cys-491, Cys-484–Cys-498, and Cys-503–Cys-508.

The protein localises to the secreted. Its function is as follows. Might have a role in sequestration of chitin oligosaccharides (breakdown products of fungal cell walls that are released during invasion and act as triggers of host immunity) to dampen host defense. This chain is LysM domain-containing protein ARB_03442, found in Arthroderma benhamiae (strain ATCC MYA-4681 / CBS 112371) (Trichophyton mentagrophytes).